The chain runs to 748 residues: Meprin A subunit alpha (748 aa).

An N-terminal signal peptide occupies residues 1-20 (MLWTLPVCLLSLSFSAHIAA). A propeptide spanning residues 21–66 (VSIQHLSTGHDHDDVDVGEQQKDISEINSAAGLNLFQGDILLPRTR) is cleaved from the precursor. One can recognise a Peptidase M12A domain in the interval 67-261 (NALRDPSSRW…TRLNRMYNCT (195 aa)). At 67–719 (NALRDPSSRW…RCQAMHVHGS (653 aa)) the chain is on the extracellular side. Intrachain disulfides connect cysteine 108–cysteine 260, cysteine 129–cysteine 148, and cysteine 270–cysteine 432. Asparagine 141 carries an N-linked (GlcNAc...) asparagine glycan. Histidine 156 provides a ligand contact to Zn(2+). Residue glutamate 157 is part of the active site. Zn(2+) contacts are provided by histidine 160 and histidine 166. N-linked (GlcNAc...) asparagine glycosylation is found at asparagine 223, asparagine 259, asparagine 319, asparagine 441, and asparagine 542. Residues 265 to 434 (TLLDHCAFEK…ITLTETPCPT (170 aa)) form the MAM domain. An MATH domain is found at 435-596 (GVWTIRNISQ…DDTLIIFVDF (162 aa)). The disordered stretch occupies residues 641 to 668 (LPRRLDQRQPSRPKRSVENTGPMEDHNW). The EGF-like domain maps to 672-712 (FRDPCDPNPCQNEGTCVNVKGMASCRCVSGHAFFYTGERCQ). Disulfide bonds link cysteine 676/cysteine 687, cysteine 681/cysteine 696, and cysteine 698/cysteine 711. A helical transmembrane segment spans residues 720–739 (LLGLLIGCITALIFLTFITF). The Cytoplasmic portion of the chain corresponds to 740 to 748 (SNTYQKLRQ).

Homotetramer consisting of disulfide-linked alpha subunits, homooligomer consisting of disulfide-linked alpha subunit homodimers, or heterotetramer of two alpha and two beta subunits formed by non-covalent association of two disulfide-linked heterodimers. Interacts with MBL2 through its carbohydrate moiety. This interaction may inhibit its catalytic activity. Zn(2+) is required as a cofactor. Post-translationally, N-glycosylated; contains GlcNAc, galactose, mannose and a small amount of fucose. In terms of tissue distribution, colocalized with E-24.11 in proximal tubules of juxtamedullary nephrons.

The protein resides in the membrane. The catalysed reaction is Hydrolysis of protein and peptide substrates preferentially on carboxyl side of hydrophobic residues.. Its activity is regulated as follows. Inhibited by actinonin. This is Meprin A subunit alpha (Mep1a) from Rattus norvegicus (Rat).